A 104-amino-acid polypeptide reads, in one-letter code: MVNFKKTYVLKLYVAGNTPNSVRALKTLKNILEDEFKGVYALKVIDVLKNPQLAEEDKILATPTLSKILPPPVRKIIGDLSDREKVLIGLDLLYEEIRERESEL.

The protein belongs to the KaiB family. As to quaternary structure, the KaiABC complex composition changes during the circadian cycle to control KaiC phosphorylation. Complexes KaiC(6), KaiA(2-4):KaiC(6), KaiB(6):KaiC(6) and KaiC(6):KaiB(6):KaiA(12) are among the most important forms, many form cooperatively. Undergoes a major conformational rearrangment; in the free state forms homotetramers as a dimer of dimers. When bound to the CI domain of KaiC switches to a monomeric thioredoxin-fold (KaiB(fs)). KaiB(fs) binds CikA, leading it to dephosphorylate phospho-RpaA.

Its function is as follows. Key component of the KaiABC oscillator complex, which constitutes the main circadian regulator in cyanobacteria. Complex composition changes during the circadian cycle to control KaiC phosphorylation. KaiA stimulates KaiC autophosphorylation, while KaiB sequesters KaiA, leading to KaiC autodephosphorylation. Phospho-Ser-431 KaiC accumulation triggers binding of KaiB to form the KaiB(6):KaiC(6) complex, leading to changes in output regulators CikA and SasA. KaiB switches to a thioredoxin-like fold (KaiB(fs)) when bound to KaiC. KaiB(6):KaiC(6) formation exposes a site for KaiA binding that sequesters KaiA from KaiC, making the KaiC(6):KaiB(6):KaiA(12) complex that results in KaiC autodephosphorylation. A metamorphic protein which reversibly switches between an inactive tetrameric fold and a rare, thioredoxin-like monomeric fold (KaiB(fs)). KaiB(fs) binds phospho-KaiC, KaiA and CikA. KaiA and CikA compete for binding to KaiB(fs), and KaiB(fs) and SasA compete for binding to KaiC, thus the clock oscillator and output signal pathway are tightly coupled. In Rippkaea orientalis (strain PCC 8801 / RF-1) (Cyanothece sp. (strain PCC 8801)), this protein is Circadian clock oscillator protein KaiB.